The primary structure comprises 425 residues: G protein-activated inward rectifier potassium channel 2 (425 aa).

Over Met1 to Trp91 the chain is Cytoplasmic. A phosphoserine mark is found at Ser18 and Ser25. The helical transmembrane segment at Arg92–Ile116 threads the bilayer. Residues Ala117–Gly140 are Extracellular-facing. An intramembrane region (helical; Pore-forming) is located at residues Phe141 to Glu152. The segment at residues Thr153–Tyr159 is an intramembrane region (pore-forming). The Selectivity filter signature appears at Thr154–Tyr159. Residues Arg160–Glu168 lie on the Extracellular side of the membrane. Residues Gly169–Cys190 traverse the membrane as a helical segment. The Cytoplasmic segment spans residues Met191 to Val425. Residues Asn392 to Val425 are disordered. Positions Glu422 to Val425 match the PDZ-binding motif.

This sequence belongs to the inward rectifier-type potassium channel (TC 1.A.2.1) family. KCNJ6 subfamily. In terms of assembly, associates with KCNJ3/GIRK1 or KCNJ5/GRIK4 to form a G-protein-activated heteromultimer pore-forming unit. The resulting inward current is much larger. Interacts (via PDZ-binding motif) with SNX27 (via PDZ domain); the interaction is required for recycling to the plasma membrane when endocytosed and prevent degradation in lysosomes. In terms of tissue distribution, pancreatic beta cells and brain.

It is found in the membrane. It catalyses the reaction K(+)(in) = K(+)(out). Its activity is regulated as follows. Activated by phosphatidylinositol 4,5 biphosphate (PtdIns(4,5)P2). Inward rectifier potassium channels are characterized by a greater tendency to allow potassium to flow into the cell rather than out of it. Their voltage dependence is regulated by the concentration of extracellular potassium; as external potassium is raised, the voltage range of the channel opening shifts to more positive voltages. The inward rectification is mainly due to the blockage of outward current by internal magnesium. This potassium channel may be involved in the regulation of insulin secretion by glucose and/or neurotransmitters acting through G-protein-coupled receptors. In Rattus norvegicus (Rat), this protein is G protein-activated inward rectifier potassium channel 2 (Kcnj6).